Consider the following 136-residue polypeptide: UPF0102 protein BBta_0181 (136 aa).

It belongs to the UPF0102 family.

This is UPF0102 protein BBta_0181 from Bradyrhizobium sp. (strain BTAi1 / ATCC BAA-1182).